Consider the following 157-residue polypeptide: UPF0262 protein Avi_0642 (157 aa).

The protein belongs to the UPF0262 family.

The polypeptide is UPF0262 protein Avi_0642 (Allorhizobium ampelinum (strain ATCC BAA-846 / DSM 112012 / S4) (Agrobacterium vitis (strain S4))).